A 377-amino-acid polypeptide reads, in one-letter code: N5-carboxyaminoimidazole ribonucleotide synthase (377 aa).

ATP is bound by residues arginine 93, lysine 133, glycine 138 to glutamine 144, glutamate 175 to valine 178, glutamate 183, histidine 206, and asparagine 257 to glutamate 258. The 191-residue stretch at lysine 97–cysteine 287 folds into the ATP-grasp domain.

This sequence belongs to the PurK/PurT family. As to quaternary structure, homodimer.

The catalysed reaction is 5-amino-1-(5-phospho-beta-D-ribosyl)imidazole + hydrogencarbonate + ATP = 5-carboxyamino-1-(5-phospho-D-ribosyl)imidazole + ADP + phosphate + 2 H(+). It functions in the pathway purine metabolism; IMP biosynthesis via de novo pathway; 5-amino-1-(5-phospho-D-ribosyl)imidazole-4-carboxylate from 5-amino-1-(5-phospho-D-ribosyl)imidazole (N5-CAIR route): step 1/2. Functionally, catalyzes the ATP-dependent conversion of 5-aminoimidazole ribonucleotide (AIR) and HCO(3)(-) to N5-carboxyaminoimidazole ribonucleotide (N5-CAIR). This chain is N5-carboxyaminoimidazole ribonucleotide synthase, found in Vibrio cholerae serotype O1 (strain ATCC 39315 / El Tor Inaba N16961).